The sequence spans 265 residues: MSDIITAFILGIVEGLAEFLPISSTGHLILVGHLLGFEGERAKTFEIVIQLGAILAIAILYHKRLVSLCNIKPLLRKEKKFNAFHVFLGVFPAVVAGLLLHDIIKTYLFQPYTVVIGLVAGAILMIFAEVKKQEATSYSLDDLTYRQALTIGLFQCLAVYPGFSRAGSTISGGLLAKVNYKTASEFSFLIALPVMVGATGLDLLKSWTYLSVDDIPMFAVGFITSFIVAMLAVVTFLKLLEKIGLKPFAYYRILLAILFTVFVLL.

Transmembrane regions (helical) follow at residues 4 to 24 (IITA…PISS), 42 to 62 (AKTF…ILYH), 84 to 104 (FHVF…HDII), 108 to 128 (LFQP…MIFA), 184 to 204 (SEFS…LDLL), 217 to 237 (MFAV…VTFL), and 245 to 265 (LKPF…FVLL).

The protein belongs to the UppP family.

The protein resides in the cell membrane. The catalysed reaction is di-trans,octa-cis-undecaprenyl diphosphate + H2O = di-trans,octa-cis-undecaprenyl phosphate + phosphate + H(+). In terms of biological role, catalyzes the dephosphorylation of undecaprenyl diphosphate (UPP). Confers resistance to bacitracin. In Bacillus thuringiensis subsp. konkukian (strain 97-27), this protein is Undecaprenyl-diphosphatase 1.